The following is a 782-amino-acid chain: E3 ubiquitin-protein ligase SopA (782 aa).

Cys753 functions as the Glycyl thioester intermediate in the catalytic mechanism.

This sequence belongs to the SopA E3 ligase family. Ubiquitinated in the presence of host E1 ubiquitin-activating enzyme, E2 ubiquitin-conjugating enzyme and ubiquitin.

Its subcellular location is the secreted. It is found in the host cell. The enzyme catalyses S-ubiquitinyl-[E2 ubiquitin-conjugating enzyme]-L-cysteine + [acceptor protein]-L-lysine = [E2 ubiquitin-conjugating enzyme]-L-cysteine + N(6)-ubiquitinyl-[acceptor protein]-L-lysine.. Its function is as follows. Effector proteins function to alter host cell physiology and promote bacterial survival in host tissues. This protein is an E3 ubiquitin ligase that interferes with host's ubiquitination pathway. This is E3 ubiquitin-protein ligase SopA (sopA) from Salmonella choleraesuis (strain SC-B67).